The primary structure comprises 307 residues: Transmembrane and coiled-coil domain-containing protein 5B (307 aa).

Positions 20–212 (TLEAIKQNLK…SKAQNDSSQV (193 aa)) form a coiled coil. The chain crosses the membrane as a helical span at residues 246 to 268 (YLFFMVMIVIRLLGYVFFHLQYV).

It belongs to the TMCO5 family.

The protein resides in the membrane. This Mus musculus (Mouse) protein is Transmembrane and coiled-coil domain-containing protein 5B (Tmco5b).